The primary structure comprises 280 residues: Probable aquaporin PIP2-8 (280 aa).

Residues 1-21 (MAAGSGSGSNPKDYQDPPPAP) form a disordered region. The next 2 membrane-spanning stretches (helical) occupy residues 36–56 (AAIAEFTATLLLVCISVSTVI) and 70–92 (LGIAWAFGGLIFVLVYCTAGISG). Residues 96-98 (NPA) carry the NPA 1 motif. Transmembrane regions (helical) follow at residues 113–135 (RAALYTMAQCVGAVCGAGLARAM), 156–176 (SAGAGVVAEMVGTFVLVYTVF), and 192–212 (VLAPLPIGLAVLVVHLATIPI). The short motif at 218 to 220 (NPA) is the NPA 2 element. The chain crosses the membrane as a helical span at residues 236–256 (AWSHLWIFWVGPFAGAAAAMI).

Belongs to the MIP/aquaporin (TC 1.A.8) family. PIP (TC 1.A.8.11) subfamily. In terms of tissue distribution, expressed in leaves and at lower levels in roots.

The protein localises to the cell membrane. Functionally, aquaporins facilitate the transport of water and small neutral solutes across cell membranes. The protein is Probable aquaporin PIP2-8 (PIP2-8) of Oryza sativa subsp. japonica (Rice).